Here is a 440-residue protein sequence, read N- to C-terminus: Xylose isomerase (440 aa).

Residues His101 and Asp104 contribute to the active site. Mg(2+) contacts are provided by Glu232, Glu268, His271, Asp296, Asp307, Asp309, and Asp339.

This sequence belongs to the xylose isomerase family. In terms of assembly, homotetramer. Mg(2+) serves as cofactor.

Its subcellular location is the cytoplasm. It catalyses the reaction alpha-D-xylose = alpha-D-xylulofuranose. In Salmonella agona (strain SL483), this protein is Xylose isomerase.